A 403-amino-acid polypeptide reads, in one-letter code: NADH-quinone oxidoreductase subunit D (403 aa).

The protein belongs to the complex I 49 kDa subunit family. NDH-1 is composed of 14 different subunits. Subunits NuoB, C, D, E, F, and G constitute the peripheral sector of the complex.

The protein resides in the cell inner membrane. The enzyme catalyses a quinone + NADH + 5 H(+)(in) = a quinol + NAD(+) + 4 H(+)(out). In terms of biological role, NDH-1 shuttles electrons from NADH, via FMN and iron-sulfur (Fe-S) centers, to quinones in the respiratory chain. The immediate electron acceptor for the enzyme in this species is believed to be ubiquinone. Couples the redox reaction to proton translocation (for every two electrons transferred, four hydrogen ions are translocated across the cytoplasmic membrane), and thus conserves the redox energy in a proton gradient. The polypeptide is NADH-quinone oxidoreductase subunit D (Ruegeria sp. (strain TM1040) (Silicibacter sp.)).